The chain runs to 155 residues: Cytochrome c-550 (155 aa).

The first 20 residues, M1–A20, serve as a signal peptide directing secretion. Q21 is modified (pyrrolidone carboxylic acid). The heme c site is built by C35, C38, H39, and M120. The propeptide occupies A150 to N155.

Post-translationally, binds 1 heme c group covalently per subunit.

This Paracoccus denitrificans protein is Cytochrome c-550 (cycA).